The sequence spans 180 residues: Ribulose bisphosphate carboxylase small subunit, chloroplastic 1 (180 aa).

A chloroplast-targeting transit peptide spans 1-56 (MASSVISSAAVATRTNVAQASMVAPFNGLKSAVSFPVSSKQNLDITSIASNGGRVQ).

This sequence belongs to the RuBisCO small chain family. In terms of assembly, heterohexadecamer of 8 large and 8 small subunits.

It is found in the plastid. The protein resides in the chloroplast. RuBisCO catalyzes two reactions: the carboxylation of D-ribulose 1,5-bisphosphate, the primary event in carbon dioxide fixation, as well as the oxidative fragmentation of the pentose substrate. Both reactions occur simultaneously and in competition at the same active site. Although the small subunit is not catalytic it is essential for maximal activity. This chain is Ribulose bisphosphate carboxylase small subunit, chloroplastic 1, found in Petunia hybrida (Petunia).